The following is a 343-amino-acid chain: Ribosomal RNA small subunit methyltransferase C (343 aa).

This sequence belongs to the methyltransferase superfamily. RsmC family. As to quaternary structure, monomer.

It is found in the cytoplasm. The enzyme catalyses guanosine(1207) in 16S rRNA + S-adenosyl-L-methionine = N(2)-methylguanosine(1207) in 16S rRNA + S-adenosyl-L-homocysteine + H(+). Functionally, specifically methylates the guanine in position 1207 of 16S rRNA in the 30S particle. The chain is Ribosomal RNA small subunit methyltransferase C from Escherichia coli (strain K12 / DH10B).